Reading from the N-terminus, the 301-residue chain is Lysozyme-like protein 3 (301 aa).

An N-terminal signal peptide occupies residues 1–15 (MKLFALLVSITLCYS). The 219-residue stretch at 64–282 (HAYSVDISFH…HLSQIVHFST (219 aa)) folds into the Ch-type lysozyme domain.

The protein belongs to the glycosyl hydrolase 25 family.

Functionally, plays a role in the stress response to heavy metals such as copper, probably in a kgb-1-dependent manner. The protein is Lysozyme-like protein 3 of Caenorhabditis elegans.